The primary structure comprises 322 residues: Crystallin J1A (322 aa).

This sequence belongs to the ADP-ribosylglycohydrolase family. J1 crystallin subfamily. As to expression, expressed in the rhopalia. Present in both the large and small eyes.

This chain is Crystallin J1A, found in Tripedalia cystophora (Jellyfish).